The chain runs to 914 residues: DENN domain-containing protein 2C (914 aa).

The interval 46–98 is disordered; the sequence is FGVRYNCHQESPPHKRPTGEERNGALPRNTDVKSRDQSEDEGEGGECRGSHPS. Residues 56 to 68 are compositionally biased toward basic and acidic residues; the sequence is SPPHKRPTGEERN. Ser-261 carries the post-translational modification Phosphoserine. The tract at residues 411–446 is disordered; the sequence is GKKRVKLQPYTGKEAPSSKGETSGNESDAEYLPKNR. The region spanning 480-627 is the uDENN domain; sequence ELFVVVSLQK…PFPAPGRTIT (148 aa). Positions 649 to 782 constitute a cDENN domain; it reads RLEHVDFECL…LQAALVQILE (134 aa). The 91-residue stretch at 784–874 folds into the dDENN domain; sequence RDEVLAQEQQ…QDRELRQSGV (91 aa).

Its function is as follows. Guanine nucleotide exchange factor (GEF) which may activate RAB9A and RAB9B. Promotes the exchange of GDP to GTP, converting inactive GDP-bound Rab proteins into their active GTP-bound form. The chain is DENN domain-containing protein 2C (Dennd2c) from Mus musculus (Mouse).